The primary structure comprises 498 residues: Lysine--tRNA ligase (498 aa).

Residues glutamate 407 and glutamate 414 each coordinate Mg(2+).

The protein belongs to the class-II aminoacyl-tRNA synthetase family. As to quaternary structure, homodimer. Requires Mg(2+) as cofactor.

It is found in the cytoplasm. The enzyme catalyses tRNA(Lys) + L-lysine + ATP = L-lysyl-tRNA(Lys) + AMP + diphosphate. The polypeptide is Lysine--tRNA ligase (Rhizobium johnstonii (strain DSM 114642 / LMG 32736 / 3841) (Rhizobium leguminosarum bv. viciae)).